The chain runs to 361 residues: 3-dehydroquinate synthase (361 aa).

Belongs to the archaeal-type DHQ synthase family.

The catalysed reaction is 2-amino-2,3,7-trideoxy-D-lyxo-hept-6-ulosonate + NAD(+) + H2O = 3-dehydroquinate + NH4(+) + NADH + H(+). In terms of biological role, catalyzes the oxidative deamination and cyclization of 2-amino-3,7-dideoxy-D-threo-hept-6-ulosonic acid (ADH) to yield 3-dehydroquinate (DHQ), which is fed into the canonical shikimic pathway of aromatic amino acid biosynthesis. The chain is 3-dehydroquinate synthase from Methanococcus maripaludis (strain DSM 14266 / JCM 13030 / NBRC 101832 / S2 / LL).